We begin with the raw amino-acid sequence, 414 residues long: Esterase FrsA (414 aa).

Belongs to the FrsA family.

It catalyses the reaction a carboxylic ester + H2O = an alcohol + a carboxylate + H(+). Functionally, catalyzes the hydrolysis of esters. The polypeptide is Esterase FrsA (Salmonella typhi).